The chain runs to 624 residues: RQC trigger complex subunit CUE3 (624 aa).

Positions 316 to 359 (VNEEQLSALMELFPQFSKYQLSQTLLAYDNNIELVTNKIFEDPT) constitute a CUE domain. Disordered stretches follow at residues 366–390 (REPA…ELSI), 435–469 (RDDT…DDSN), and 546–624 (SKTG…NNAI). Ser-377 bears the Phosphoserine mark. Basic and acidic residues-rich tracts occupy residues 443-455 (DVNR…RIGL) and 568-589 (EQAK…TEQK). Positions 590–617 (KRQHAKNEKRKGARANHNRKKGHDKKLA) are enriched in basic residues.

Component of the RQT (ribosome quality control trigger) complex, composed of SLH1, CUE3, and RQT4. Interacts with ubiquitin; the interaction is direct. Interacts with SLH1. Interacts with RQT4. Interacts with HEL2. Associates with translating ribosomes.

The protein resides in the cytoplasm. Its function is as follows. Involved in activation of the ribosome quality control (RQC) pathway, a pathway that degrades nascent peptide chains during problematic translation. Specifically recognizes and binds RPS20/uS10 ubiquitinated by HEL2, promoting recruitment of the RQT (ribosome quality control trigger) complex on stalled ribosomes, followed by disassembly of stalled ribosomes. The sequence is that of RQC trigger complex subunit CUE3 (CUE3) from Saccharomyces cerevisiae (strain ATCC 204508 / S288c) (Baker's yeast).